Reading from the N-terminus, the 165-residue chain is MEEIFKVGQIVNTHGIKGEVKVYPLTEDVNKFKKLKNVLIDGKERNIQSVKFQKDRVILKIEGIDTMNDAETYKQKYIEIFRSNAPKLEADTHYVVDLVGCMVYDSDNVELGKIFDVISTPSNDVYWIKEPKQLLIPVLKDIVLDINIDNKKIVIKPVRQWQDED.

Residues 89–161 enclose the PRC barrel domain; the sequence is EADTHYVVDL…KIVIKPVRQW (73 aa).

The protein belongs to the RimM family. As to quaternary structure, binds ribosomal protein uS19.

It localises to the cytoplasm. Its function is as follows. An accessory protein needed during the final step in the assembly of 30S ribosomal subunit, possibly for assembly of the head region. Essential for efficient processing of 16S rRNA. May be needed both before and after RbfA during the maturation of 16S rRNA. It has affinity for free ribosomal 30S subunits but not for 70S ribosomes. The protein is Ribosome maturation factor RimM of Clostridium botulinum (strain Eklund 17B / Type B).